The sequence spans 403 residues: 8-amino-7-oxononanoate synthase (403 aa).

R22 lines the substrate pocket. Position 109-110 (109-110 (GF)) interacts with pyridoxal 5'-phosphate. H134 lines the substrate pocket. Residues S178, H206, and T232 each contribute to the pyridoxal 5'-phosphate site. K235 carries the post-translational modification N6-(pyridoxal phosphate)lysine. T348 contacts substrate. Positions 383–403 (SNDSGSKPSIESSFELKKEAQ) are disordered. Polar residues predominate over residues 385-394 (DSGSKPSIES).

The protein belongs to the class-II pyridoxal-phosphate-dependent aminotransferase family. BioF subfamily. In terms of assembly, homodimer. It depends on pyridoxal 5'-phosphate as a cofactor.

It carries out the reaction 6-carboxyhexanoyl-[ACP] + L-alanine + H(+) = (8S)-8-amino-7-oxononanoate + holo-[ACP] + CO2. The protein operates within cofactor biosynthesis; biotin biosynthesis. Its function is as follows. Catalyzes the decarboxylative condensation of pimeloyl-[acyl-carrier protein] and L-alanine to produce 8-amino-7-oxononanoate (AON), [acyl-carrier protein], and carbon dioxide. The polypeptide is 8-amino-7-oxononanoate synthase (Vibrio atlanticus (strain LGP32) (Vibrio splendidus (strain Mel32))).